The following is a 283-amino-acid chain: Bifunctional protein FolD (283 aa).

Residues 165–167 (GAS), S190, and I231 each bind NADP(+).

It belongs to the tetrahydrofolate dehydrogenase/cyclohydrolase family. As to quaternary structure, homodimer.

The catalysed reaction is (6R)-5,10-methylene-5,6,7,8-tetrahydrofolate + NADP(+) = (6R)-5,10-methenyltetrahydrofolate + NADPH. It catalyses the reaction (6R)-5,10-methenyltetrahydrofolate + H2O = (6R)-10-formyltetrahydrofolate + H(+). It functions in the pathway one-carbon metabolism; tetrahydrofolate interconversion. Catalyzes the oxidation of 5,10-methylenetetrahydrofolate to 5,10-methenyltetrahydrofolate and then the hydrolysis of 5,10-methenyltetrahydrofolate to 10-formyltetrahydrofolate. The sequence is that of Bifunctional protein FolD from Bordetella bronchiseptica (strain ATCC BAA-588 / NCTC 13252 / RB50) (Alcaligenes bronchisepticus).